The primary structure comprises 89 residues: Small ribosomal subunit protein uS15 (89 aa).

Belongs to the universal ribosomal protein uS15 family. In terms of assembly, part of the 30S ribosomal subunit. Forms a bridge to the 50S subunit in the 70S ribosome, contacting the 23S rRNA.

One of the primary rRNA binding proteins, it binds directly to 16S rRNA where it helps nucleate assembly of the platform of the 30S subunit by binding and bridging several RNA helices of the 16S rRNA. In terms of biological role, forms an intersubunit bridge (bridge B4) with the 23S rRNA of the 50S subunit in the ribosome. The chain is Small ribosomal subunit protein uS15 from Corynebacterium urealyticum (strain ATCC 43042 / DSM 7109).